The following is a 430-amino-acid chain: MIOREX complex component 4 (430 aa).

Residues 1–27 (MTVLYTSASLKKMKCLAFNMGMNCVRT) constitute a mitochondrion transit peptide. The helical transmembrane segment at 403 to 420 (FLISLSALLASFFAYYRY) threads the bilayer.

In terms of assembly, associates with the mitochondrial ribosome.

It localises to the mitochondrion. Its subcellular location is the mitochondrion membrane. In terms of biological role, component of MIOREX complexes, large expressome-like assemblies of ribosomes with factors involved in all the steps of post-transcriptional gene expression. The sequence is that of MIOREX complex component 4 from Saccharomyces cerevisiae (strain ATCC 204508 / S288c) (Baker's yeast).